The sequence spans 59 residues: Large ribosomal subunit protein bL32c (59 aa).

The disordered stretch occupies residues 37-59; it reads SRSFSSGNEHPKPKGFSGQQTNK.

It belongs to the bacterial ribosomal protein bL32 family.

The protein localises to the plastid. It is found in the chloroplast. The polypeptide is Large ribosomal subunit protein bL32c (Hordeum vulgare (Barley)).